A 472-amino-acid chain; its full sequence is Maintenance of mitochondrial morphology protein 1 (472 aa).

Over 1-22 (MAFQQGEAAPVSTQSSLSFTQG) the chain is Lumenal. The chain crosses the membrane as a helical span at residues 23-43 (FLLGQLSVVLLIGAFIKFFIF). Over 44-472 (GEAPPPPSRG…GSMPEAPGAQ (429 aa)) the chain is Cytoplasmic. 3 disordered regions span residues 51–92 (SRGL…VPSS), 270–303 (LHTPSPMPSPPTAGAQPAAGAQPTDGGDIPPKSS), and 370–472 (RMGR…PGAQ). The segment covering 81-92 (STSNVLRPVPSS) has biased composition (polar residues). One can recognise an SMP-LTD domain in the interval 124-365 (QPESLDWFNV…EPRVQVVGLP (242 aa)). Pro residues predominate over residues 270-280 (LHTPSPMPSPP). Low complexity predominate over residues 281–297 (TAGAQPAAGAQPTDGGD). The span at 450 to 460 (TRERSLGDDFH) shows a compositional bias: basic and acidic residues.

The protein belongs to the MMM1 family. Homodimer. Component of the ER-mitochondria encounter structure (ERMES) or MDM complex, composed of mmm1, mdm10, mdm12 and mdm34. A mmm1 homodimer associates with one molecule of mdm12 on each side in a pairwise head-to-tail manner, and the SMP-LTD domains of mmm1 and mdm12 generate a continuous hydrophobic tunnel for phospholipid trafficking.

The protein resides in the endoplasmic reticulum membrane. In terms of biological role, component of the ERMES/MDM complex, which serves as a molecular tether to connect the endoplasmic reticulum (ER) and mitochondria. Components of this complex are involved in the control of mitochondrial shape and protein biogenesis, and function in nonvesicular lipid trafficking between the ER and mitochondria. The mdm12-mmm1 subcomplex functions in the major beta-barrel assembly pathway that is responsible for biogenesis of all outer membrane beta-barrel proteins, and acts in a late step after the SAM complex. The mdm10-mdm12-mmm1 subcomplex further acts in the TOM40-specific pathway after the action of the mdm12-mmm1 complex. Essential for establishing and maintaining the structure of mitochondria and maintenance of mtDNA nucleoids. The chain is Maintenance of mitochondrial morphology protein 1 from Emericella nidulans (strain FGSC A4 / ATCC 38163 / CBS 112.46 / NRRL 194 / M139) (Aspergillus nidulans).